A 465-amino-acid chain; its full sequence is MLITRFAPSPTGDLHIGGVRTALFSWLVAKQKGGEFRLRIEDTDLERSTEASTQVILKGMEWLGLDYQGEVIYQSRRTDIYNAVIDDMIAQGLAYYCWCTPEELEEMRAAQKARGEKPRYNGKYRNGGEPVDGVTPVVRFKNPLEGTVSWHDHVRGVVTIDNSELDDFIIRRSDGMPTYNFCVVIDDHAQDIGLVIRGDDHVSNTPRQINLYRALGYQVPEFAHVPMILGDDGKRLSKRHGATNVLDYQKEGYLPEAIINYLVRLGWAYGDQEIFSIEELLTHFSIDDVHSAPSTFNTEKLRWLNQQYLMHTDIKELARLLPDFCAAQGYQLTQEQLLTVVPHYQERAKTLREMAEMMRWVACAPETFPEAAAKKAFKNDTAQIMQLLITKLQALQDFDEKTVHDALAAVVSELNIGFGKMGQPARLAITGGLPSPDLALCFALIGKENALQRLQYAIKFMTQNQ.

The 'HIGH' region signature appears at 8–18 (PSPTGDLHIGG). The 'KMSKS' region motif lies at 235-239 (RLSKR). Lysine 238 contributes to the ATP binding site.

The protein belongs to the class-I aminoacyl-tRNA synthetase family. Glutamate--tRNA ligase type 1 subfamily. Monomer.

It localises to the cytoplasm. The enzyme catalyses tRNA(Glu) + L-glutamate + ATP = L-glutamyl-tRNA(Glu) + AMP + diphosphate. Functionally, catalyzes the attachment of glutamate to tRNA(Glu) in a two-step reaction: glutamate is first activated by ATP to form Glu-AMP and then transferred to the acceptor end of tRNA(Glu). The polypeptide is Glutamate--tRNA ligase (Dichelobacter nodosus (strain VCS1703A)).